The primary structure comprises 407 residues: Putative cell wall shaping protein YabE (407 aa).

The signal sequence occupies residues 1-31 (MKKLFSVKLSKSKVILVAACLLLAGSGTAYA). The region spanning 206 to 286 (ITRIEKVTDV…DKVIAVGTKQ (81 aa)) is the G5 domain.

In terms of biological role, suggested to be involved in cell wall modification. In Bacillus subtilis (strain 168), this protein is Putative cell wall shaping protein YabE (yabE).